Consider the following 131-residue polypeptide: Small ribosomal subunit protein uS8 (131 aa).

Belongs to the universal ribosomal protein uS8 family. In terms of assembly, part of the 30S ribosomal subunit. Contacts proteins S5 and S12.

In terms of biological role, one of the primary rRNA binding proteins, it binds directly to 16S rRNA central domain where it helps coordinate assembly of the platform of the 30S subunit. The sequence is that of Small ribosomal subunit protein uS8 from Thiobacillus denitrificans (strain ATCC 25259 / T1).